A 130-amino-acid polypeptide reads, in one-letter code: DNA-directed RNA polymerase subunit omega (130 aa).

The disordered stretch occupies residues 110–130 (EELLKGLEGLAPPEEQPEEEE).

Belongs to the RNA polymerase subunit omega family. The RNAP catalytic core consists of 2 alpha, 1 beta, 1 beta' and 1 omega subunit. When a sigma factor is associated with the core the holoenzyme is formed, which can initiate transcription.

It carries out the reaction RNA(n) + a ribonucleoside 5'-triphosphate = RNA(n+1) + diphosphate. In terms of biological role, promotes RNA polymerase assembly. Latches the N- and C-terminal regions of the beta' subunit thereby facilitating its interaction with the beta and alpha subunits. The protein is DNA-directed RNA polymerase subunit omega of Afipia carboxidovorans (strain ATCC 49405 / DSM 1227 / KCTC 32145 / OM5) (Oligotropha carboxidovorans).